The chain runs to 199 residues: Superoxide dismutase [Cu-Zn] (199 aa).

Residues 1–22 (MKLTKVALFSLGLFGFSSMALA) form the signal peptide. Residues histidine 92, histidine 94, and histidine 117 each coordinate Cu cation. Cysteine 99 and cysteine 195 are oxidised to a cystine. 4 residues coordinate Zn(2+): histidine 117, histidine 126, histidine 135, and aspartate 138. Histidine 173 lines the Cu cation pocket.

Belongs to the Cu-Zn superoxide dismutase family. Homodimer. Cu cation is required as a cofactor. It depends on Zn(2+) as a cofactor.

Its subcellular location is the periplasm. It catalyses the reaction 2 superoxide + 2 H(+) = H2O2 + O2. In terms of biological role, destroys radicals which are normally produced within the cells and which are toxic to biological systems. May play a role in the interactive biology of organisms with their hosts and so contribute to their capacity to cause disease. The polypeptide is Superoxide dismutase [Cu-Zn] (sodC) (Haemophilus ducreyi (strain 35000HP / ATCC 700724)).